Here is a 308-residue protein sequence, read N- to C-terminus: Glutaminase (308 aa).

Ser68, Asn118, Glu162, Asn169, Tyr193, Tyr244, and Val262 together coordinate substrate.

This sequence belongs to the glutaminase family. As to quaternary structure, homotetramer.

It carries out the reaction L-glutamine + H2O = L-glutamate + NH4(+). The polypeptide is Glutaminase (Hahella chejuensis (strain KCTC 2396)).